The chain runs to 69 residues: Cap-specific mRNA (nucleoside-2'-O-)-methyltransferase (69 aa).

Tyrosine 22 serves as a coordination point for mRNA. The S-adenosyl-L-methionine site is built by glutamine 39, tyrosine 66, and glycine 68.

The protein belongs to the class I-like SAM-binding methyltransferase superfamily. Poxvirus/kinetoplastid 2'-O-MTase family. In terms of assembly, interacts with poly(A) polymerase catalytic subunit OPG063. Interacts with OPG109 and OPG123; these interactions might help linking transcription to capping and polyadenylation.

It localises to the virion. It catalyses the reaction a 5'-end (N(7)-methyl 5'-triphosphoguanosine)-ribonucleoside in mRNA + S-adenosyl-L-methionine = a 5'-end (N(7)-methyl 5'-triphosphoguanosine)-(2'-O-methyl-ribonucleoside) in mRNA + S-adenosyl-L-homocysteine + H(+). Displays methyltransferase, positive regulation of the poly(A) polymerase and transcription elongation activities. Involved in the modification of both mRNA ends and in intermediate and late gene positive transcription elongation. At the mRNAs 5' end, methylates the ribose 2' OH group of the first transcribed nucleotide, thereby producing a 2'-O-methylpurine cap. At the 3' end, functions as a processivity factor which stimulates the activity of the viral poly(A) polymerase OPG063 that creates mRNA's poly(A) tail. In the presence of OPG102, OPG063 does not dissociate from the RNA allowing tail elongation to around 250 adenylates. The sequence is that of Cap-specific mRNA (nucleoside-2'-O-)-methyltransferase (OPG102) from Sus scrofa (Pig).